The primary structure comprises 208 residues: ATP-dependent Clp protease proteolytic subunit (208 aa).

The active-site Nucleophile is Ser106. Residue His131 is part of the active site.

This sequence belongs to the peptidase S14 family. As to quaternary structure, fourteen ClpP subunits assemble into 2 heptameric rings which stack back to back to give a disk-like structure with a central cavity, resembling the structure of eukaryotic proteasomes.

The protein localises to the cytoplasm. The enzyme catalyses Hydrolysis of proteins to small peptides in the presence of ATP and magnesium. alpha-casein is the usual test substrate. In the absence of ATP, only oligopeptides shorter than five residues are hydrolyzed (such as succinyl-Leu-Tyr-|-NHMec, and Leu-Tyr-Leu-|-Tyr-Trp, in which cleavage of the -Tyr-|-Leu- and -Tyr-|-Trp bonds also occurs).. In terms of biological role, cleaves peptides in various proteins in a process that requires ATP hydrolysis. Has a chymotrypsin-like activity. Plays a major role in the degradation of misfolded proteins. The protein is ATP-dependent Clp protease proteolytic subunit of Roseobacter denitrificans (strain ATCC 33942 / OCh 114) (Erythrobacter sp. (strain OCh 114)).